The following is a 295-amino-acid chain: Phosphoserine phosphatase, chloroplastic (295 aa).

Residues 1 to 54 (MEALTTSRVVPVQVPCRKLSSLFANFSCLELRRYPCRGLVSIMNHPKLLRPVTA) constitute a chloroplast transit peptide. D89 serves as the catalytic Nucleophile. Mg(2+) is bound by residues D89 and D91. The active-site Proton donor is the D91. Residues E98, R134, 178-179 (SG), and K227 each bind substrate. D248 provides a ligand contact to Mg(2+).

This sequence belongs to the HAD-like hydrolase superfamily. SerB family. The cofactor is Mg(2+). As to expression, ubiquitous. Mainly expressed in shoot and root meristems, vasculature, pollen, anthers, carpels and seeds.

The protein resides in the plastid. Its subcellular location is the chloroplast. It catalyses the reaction O-phospho-L-serine + H2O = L-serine + phosphate. The enzyme catalyses O-phospho-D-serine + H2O = D-serine + phosphate. It participates in amino-acid biosynthesis; L-serine biosynthesis; L-serine from 3-phospho-D-glycerate: step 3/3. Approximately 60% inhibition of PSP activity is observed in presence of 10 mM serine. Its function is as follows. Catalyzes the last step in the plastidial phosphorylated pathway of serine biosynthesis (PPSB). The reaction mechanism proceeds via the formation of a phosphoryl-enzyme intermediates. Required for embryo, pollen and root development. May be required preferentially for serine biosynthesis in non-photosynthetic tissues. This Arabidopsis thaliana (Mouse-ear cress) protein is Phosphoserine phosphatase, chloroplastic (PSP).